Here is a 397-residue protein sequence, read N- to C-terminus: Ubiquitin-like modifier-activating enzyme 5 (397 aa).

G76, D97, K120, N143, and N177 together coordinate ATP. Positions 219 and 222 each coordinate Zn(2+). C243 (glycyl thioester intermediate) is an active-site residue. The Zn(2+) site is built by C296 and C301. The interval 362 to 384 (LAYEPPASTKHSETTSTTAVSDD) is disordered. A compositionally biased stretch (low complexity) spans 375-384 (TTSTTAVSDD).

The protein belongs to the ubiquitin-activating E1 family. UBA5 subfamily.

Functionally, E1-like enzyme which activates UFM1. This chain is Ubiquitin-like modifier-activating enzyme 5, found in Aedes aegypti (Yellowfever mosquito).